We begin with the raw amino-acid sequence, 91 residues long: Uteroglobin (91 aa).

The N-terminal stretch at 1–21 (MKLAVTLTLVTLALCCSSASA) is a signal peptide.

This sequence belongs to the secretoglobin family. As to quaternary structure, antiparallel homodimer; disulfide-linked. Interaction with LMBR1L has been observed in PubMed:16423471, but not in PubMed:23964685. Club cells (nonciliated cells of the surface epithelium of the pulmonary airways).

The protein resides in the secreted. Its function is as follows. Binds phosphatidylcholine, phosphatidylinositol, polychlorinated biphenyls (PCB) and weakly progesterone, potent inhibitor of phospholipase A2. The protein is Uteroglobin (SCGB1A1) of Homo sapiens (Human).